A 1050-amino-acid chain; its full sequence is Beta-galactosidase (1050 aa).

Residues Asn110 and Asp209 each coordinate substrate. Residue Asp209 coordinates Na(+). The Mg(2+) site is built by Glu432, His434, and Glu477. Substrate is bound by residues Glu477 and 553 to 556; that span reads EYAH. The active-site Proton donor is the Glu477. Glu553 functions as the Nucleophile in the catalytic mechanism. Asn613 serves as a coordination point for Mg(2+). Na(+)-binding residues include Phe617 and Asn620. The substrate site is built by Asn620 and Trp1023.

The protein belongs to the glycosyl hydrolase 2 family. Homotetramer. Mg(2+) serves as cofactor. Requires Na(+) as cofactor.

The enzyme catalyses Hydrolysis of terminal non-reducing beta-D-galactose residues in beta-D-galactosides.. The sequence is that of Beta-galactosidase from Yersinia enterocolitica serotype O:8 / biotype 1B (strain NCTC 13174 / 8081).